The sequence spans 331 residues: MGSVKDLVVLKEPAEKPGLGRFIFSNRYSVFDYGEMPDKIEDKGRALCMVTAYFFEKLEEAGIATHYLGLVEGGKVRRFDEVENAVNEMEVKLVRVIKPKNGDYSIFKTLKGNFLVPLEIIYRNSIPEGSSLLRRIERGEAKPEDFGLTKIEAGMRLERPIVDFSTKLEDVDRYLSHSEAKEISGLSDEEFEALKELVVKVDEIITREVSKAGLINEDGKIEVALDDERNLMVVDAVGTPDECRFSFDGFEVSKELLREYYRKTEWYDKVRQLKGQEGWREAVGLPPPLPDEVREGVSNLYRAFCNEVTGRKFFDAPKLKEVVSQLKEVLE.

Belongs to the SAICAR synthetase family. Highly divergent.

The catalysed reaction is 5-amino-1-(5-phospho-D-ribosyl)imidazole-4-carboxylate + L-aspartate + ATP = (2S)-2-[5-amino-1-(5-phospho-beta-D-ribosyl)imidazole-4-carboxamido]succinate + ADP + phosphate + 2 H(+). Its pathway is purine metabolism; IMP biosynthesis via de novo pathway; 5-amino-1-(5-phospho-D-ribosyl)imidazole-4-carboxamide from 5-amino-1-(5-phospho-D-ribosyl)imidazole-4-carboxylate: step 1/2. The chain is Putative phosphoribosylaminoimidazole-succinocarboxamide synthase (purC) from Archaeoglobus fulgidus (strain ATCC 49558 / DSM 4304 / JCM 9628 / NBRC 100126 / VC-16).